We begin with the raw amino-acid sequence, 555 residues long: Formate--tetrahydrofolate ligase (555 aa).

65–72 (TPAGEGKT) lines the ATP pocket.

This sequence belongs to the formate--tetrahydrofolate ligase family.

It catalyses the reaction (6S)-5,6,7,8-tetrahydrofolate + formate + ATP = (6R)-10-formyltetrahydrofolate + ADP + phosphate. It participates in one-carbon metabolism; tetrahydrofolate interconversion. This is Formate--tetrahydrofolate ligase from Caldanaerobacter subterraneus subsp. tengcongensis (strain DSM 15242 / JCM 11007 / NBRC 100824 / MB4) (Thermoanaerobacter tengcongensis).